The chain runs to 127 residues: S-adenosylmethionine decarboxylase proenzyme 2 (127 aa).

Ser-63 functions as the Schiff-base intermediate with substrate; via pyruvic acid in the catalytic mechanism. The residue at position 63 (Ser-63) is a Pyruvic acid (Ser); by autocatalysis. Residue His-68 is the Proton acceptor; for processing activity of the active site. Cys-83 functions as the Proton donor; for catalytic activity in the catalytic mechanism.

The protein belongs to the prokaryotic AdoMetDC family. Type 1 subfamily. Heterotetramer of two alpha and two beta chains arranged as a dimer of alpha/beta heterodimers. Pyruvate serves as cofactor. In terms of processing, is synthesized initially as an inactive proenzyme. Formation of the active enzyme involves a self-maturation process in which the active site pyruvoyl group is generated from an internal serine residue via an autocatalytic post-translational modification. Two non-identical subunits are generated from the proenzyme in this reaction, and the pyruvate is formed at the N-terminus of the alpha chain, which is derived from the carboxyl end of the proenzyme. The post-translation cleavage follows an unusual pathway, termed non-hydrolytic serinolysis, in which the side chain hydroxyl group of the serine supplies its oxygen atom to form the C-terminus of the beta chain, while the remainder of the serine residue undergoes an oxidative deamination to produce ammonia and the pyruvoyl group blocking the N-terminus of the alpha chain.

It catalyses the reaction S-adenosyl-L-methionine + H(+) = S-adenosyl 3-(methylsulfanyl)propylamine + CO2. It participates in amine and polyamine biosynthesis; S-adenosylmethioninamine biosynthesis; S-adenosylmethioninamine from S-adenosyl-L-methionine: step 1/1. Catalyzes the decarboxylation of S-adenosylmethionine to S-adenosylmethioninamine (dcAdoMet), the propylamine donor required for the synthesis of the polyamines spermine and spermidine from the diamine putrescine. The chain is S-adenosylmethionine decarboxylase proenzyme 2 from Halalkalibacterium halodurans (strain ATCC BAA-125 / DSM 18197 / FERM 7344 / JCM 9153 / C-125) (Bacillus halodurans).